Reading from the N-terminus, the 1074-residue chain is Carbamoyl phosphate synthase large chain (1074 aa).

The tract at residues 1–399 (MPKRSDIKKV…ALMKAIRSLD (399 aa)) is carboxyphosphate synthetic domain. Residues R129, R169, G175, G176, E208, V210, E215, G241, I242, H243, Q284, and E296 each contribute to the ATP site. An ATP-grasp 1 domain is found at 133-325 (KKAMERIGEP…IARVTAKIAI (193 aa)). Residues Q284, E296, and N298 each contribute to the Mg(2+) site. Residues Q284, E296, and N298 each coordinate Mn(2+). Residues 400–543 (IDIDLGYNGK…YSTYDEECEL (144 aa)) are oligomerization domain. Residues 544 to 933 (NPSDNKKVLI…FKAEMSAENN (390 aa)) are carbamoyl phosphate synthetic domain. The region spanning 674 to 865 (NKLLNKLGIP…LAKIAAKVMA (192 aa)) is the ATP-grasp 2 domain. ATP is bound by residues R710, D749, L751, E756, G781, I782, H783, S784, Q824, and E836. Mg(2+) contacts are provided by Q824, E836, and N838. Positions 824, 836, and 838 each coordinate Mn(2+). Residues 932-1074 (NNLPLDGIVF…YHREVRYRAL (143 aa)) form the MGS-like domain. Residues 934 to 1074 (LPLDGIVFIS…YHREVRYRAL (141 aa)) form an allosteric domain region.

The protein belongs to the CarB family. Composed of two chains; the small (or glutamine) chain promotes the hydrolysis of glutamine to ammonia, which is used by the large (or ammonia) chain to synthesize carbamoyl phosphate. Tetramer of heterodimers (alpha,beta)4. Requires Mg(2+) as cofactor. It depends on Mn(2+) as a cofactor.

It catalyses the reaction hydrogencarbonate + L-glutamine + 2 ATP + H2O = carbamoyl phosphate + L-glutamate + 2 ADP + phosphate + 2 H(+). The enzyme catalyses hydrogencarbonate + NH4(+) + 2 ATP = carbamoyl phosphate + 2 ADP + phosphate + 2 H(+). Its pathway is amino-acid biosynthesis; L-arginine biosynthesis; carbamoyl phosphate from bicarbonate: step 1/1. The protein operates within pyrimidine metabolism; UMP biosynthesis via de novo pathway; (S)-dihydroorotate from bicarbonate: step 1/3. Functionally, large subunit of the glutamine-dependent carbamoyl phosphate synthetase (CPSase). CPSase catalyzes the formation of carbamoyl phosphate from the ammonia moiety of glutamine, carbonate, and phosphate donated by ATP, constituting the first step of 2 biosynthetic pathways, one leading to arginine and/or urea and the other to pyrimidine nucleotides. The large subunit (synthetase) binds the substrates ammonia (free or transferred from glutamine from the small subunit), hydrogencarbonate and ATP and carries out an ATP-coupled ligase reaction, activating hydrogencarbonate by forming carboxy phosphate which reacts with ammonia to form carbamoyl phosphate. This is Carbamoyl phosphate synthase large chain from Methanothrix thermoacetophila (strain DSM 6194 / JCM 14653 / NBRC 101360 / PT) (Methanosaeta thermophila).